Here is a 498-residue protein sequence, read N- to C-terminus: Hexokinase-1 (498 aa).

The helical transmembrane segment at 4–24 threads the bilayer; sequence AAVGAAVVCTAAVCAAAAVLV. The Hexokinase domain occupies 35-487; it reads GRVMAILKEL…SGIGAALLAA (453 aa). The segment at 90–228 is hexokinase small subdomain; the sequence is TGDEHGLFYA…GVDMRVTALV (139 aa). 3 residues coordinate ADP: Gly104, Thr105, and Asn106. Positions 194, 195, 229, and 230 each coordinate D-glucose. The hexokinase large subdomain stretch occupies residues 229–476; sequence NDTVGTLAGG…ETIVIEHSND (248 aa). Thr253 serves as a coordination point for ADP. Positions 256, 284, and 315 each coordinate D-glucose. Gly441 contributes to the ADP binding site.

The protein belongs to the hexokinase family.

It localises to the plastid. The protein localises to the chloroplast outer membrane. It carries out the reaction a D-hexose + ATP = a D-hexose 6-phosphate + ADP + H(+). It catalyses the reaction D-fructose + ATP = D-fructose 6-phosphate + ADP + H(+). The enzyme catalyses D-glucose + ATP = D-glucose 6-phosphate + ADP + H(+). It participates in carbohydrate metabolism; hexose metabolism. Its pathway is carbohydrate degradation; glycolysis; D-glyceraldehyde 3-phosphate and glycerone phosphate from D-glucose: step 1/4. In terms of biological role, fructose and glucose phosphorylating enzyme. The chain is Hexokinase-1 (HXK1) from Spinacia oleracea (Spinach).